The primary structure comprises 629 residues: tRNA uridine 5-carboxymethylaminomethyl modification enzyme MnmG (629 aa).

13-18 (GGGHAG) lines the FAD pocket. 273–287 (GPRYCPSIEDKIHRF) contributes to the NAD(+) binding site.

The protein belongs to the MnmG family. In terms of assembly, homodimer. Heterotetramer of two MnmE and two MnmG subunits. FAD is required as a cofactor.

The protein localises to the cytoplasm. NAD-binding protein involved in the addition of a carboxymethylaminomethyl (cmnm) group at the wobble position (U34) of certain tRNAs, forming tRNA-cmnm(5)s(2)U34. The polypeptide is tRNA uridine 5-carboxymethylaminomethyl modification enzyme MnmG (Shewanella baltica (strain OS185)).